The following is a 388-amino-acid chain: Transcription factor SOX-7 (388 aa).

2 disordered regions span residues 20–46 (DAELSDGQSPPAVPRPPGDKGSESRIR) and 140–197 (RDQN…VDTY). 2 stretches are compositionally biased toward basic and acidic residues: residues 36-45 (PGDKGSESRI) and 146-164 (PEKRSGSRGALGEKEDRGE). The HMG box DNA-binding region spans 45–113 (IRRPMNAFMV…QHMQDYPNYK (69 aa)). One can recognise a Sox C-terminal domain in the interval 268–388 (VSMMSPVPGC…ATYYNSYSVS (121 aa)).

Interacts with CTNNB1/beta-catenin; this interaction may lead to the proteasomal degradation of active CTNNB1 and thus inhibition of Wnt/beta-catenin-stimulated transcription. Widely expressed in adult and fetal tissues. Present both in mesenchymal and epithelial cells in some adult tissues, including colon. Tends to be down-regulated in prostate adenocarcinomas and colorectal tumors due to promoter hypermethylation.

It localises to the nucleus. It is found in the cytoplasm. In terms of biological role, binds to and activates the CDH5 promoter, hence plays a role in the transcriptional regulation of genes expressed in the hemogenic endothelium and blocks further differentiation into blood precursors. May be required for the survival of both hematopoietic and endothelial precursors during specification. Competes with GATA4 for binding and activation of the FGF3 promoter. Represses Wnt/beta-catenin-stimulated transcription, probably by targeting CTNNB1 to proteasomal degradation. Binds the DNA sequence 5'-AACAAT-3'. This Homo sapiens (Human) protein is Transcription factor SOX-7 (SOX7).